The chain runs to 308 residues: Cytochrome b (308 aa).

Helical transmembrane passes span 1–21 (FGSLLGICLLTQIITGLLLAT), 45–66 (WLIRNLHANGASFFFICIYIHI), 81–101 (WNVGVILLLTLMATAFVGYVL), and 146–166 (FFALHFLLPFAITGLTLVHLT). Heme b is bound by residues histidine 51 and histidine 65. Residues histidine 150 and histidine 164 each coordinate heme b. Histidine 169 is a binding site for a ubiquinone. 3 consecutive transmembrane segments (helical) span residues 194–214 (MKDILGFALMIIPLAALALFS), 256–276 (LGGVLALAASILVLFLIPLLH), and 288–308 (LSQILFWTLVANLLILTWVGS).

The protein belongs to the cytochrome b family. As to quaternary structure, the cytochrome bc1 complex contains 11 subunits: 3 respiratory subunits (MT-CYB, CYC1 and UQCRFS1), 2 core proteins (UQCRC1 and UQCRC2) and 6 low-molecular weight proteins (UQCRH/QCR6, UQCRB/QCR7, UQCRQ/QCR8, UQCR10/QCR9, UQCR11/QCR10 and a cleavage product of UQCRFS1). This cytochrome bc1 complex then forms a dimer. Requires heme b as cofactor.

Its subcellular location is the mitochondrion inner membrane. Its function is as follows. Component of the ubiquinol-cytochrome c reductase complex (complex III or cytochrome b-c1 complex) that is part of the mitochondrial respiratory chain. The b-c1 complex mediates electron transfer from ubiquinol to cytochrome c. Contributes to the generation of a proton gradient across the mitochondrial membrane that is then used for ATP synthesis. The protein is Cytochrome b (MT-CYB) of Ptiloprora plumbea (Leaden honeyeater).